A 509-amino-acid polypeptide reads, in one-letter code: MDIRAAEISAILKEQIKNFGQEAEVTEVGQVLAVGDGIARVYGLDNVQAGEMVEFESGVRGMALNLEQDNVGVVIFGSDREIKEGQTVKRTGAIVDVPVGKGLLGRVVDGLGNPIDGKGPIQSTERRRVDVKAPGIIPRKSVHEPMATGLKAIDALIPVGRGQRELIIGDRQTGKTAIALDTILNQKPAHSGTDENAKLYCVYVAIGQKRSTVAQFVKVLEDQGALEYSIVIAATASDAAPMQFIAPFAGCAMGEYFRDNGMHAVIVYDDLSKQAVAYRQMSLLLRRPPGREAYPGDVFYLHSRLLERAAKMGDAAGKGSLTALPVIETQANDVSAYIPTNVISITDGQIFLETDLFYQGVRPAVNVGLSVSRVGSSAQTKAMKKVAGKIKGELAQYREMAAFAQFGSDLDASTQRLLNRGARLTELLKQPQFSPLKMEEQVAVIYAGVNGYLDKLPVNKVREFEDQLLGTLRSKHQDWLDSVRDSKDLSDANANTLKGVVESIAKSFA.

169 to 176 (GDRQTGKT) is a binding site for ATP.

The protein belongs to the ATPase alpha/beta chains family. As to quaternary structure, F-type ATPases have 2 components, CF(1) - the catalytic core - and CF(0) - the membrane proton channel. CF(1) has five subunits: alpha(3), beta(3), gamma(1), delta(1), epsilon(1). CF(0) has three main subunits: a(1), b(2) and c(9-12). The alpha and beta chains form an alternating ring which encloses part of the gamma chain. CF(1) is attached to CF(0) by a central stalk formed by the gamma and epsilon chains, while a peripheral stalk is formed by the delta and b chains.

It is found in the cell inner membrane. It catalyses the reaction ATP + H2O + 4 H(+)(in) = ADP + phosphate + 5 H(+)(out). Functionally, produces ATP from ADP in the presence of a proton gradient across the membrane. The alpha chain is a regulatory subunit. This is ATP synthase subunit alpha from Methylorubrum populi (strain ATCC BAA-705 / NCIMB 13946 / BJ001) (Methylobacterium populi).